Reading from the N-terminus, the 651-residue chain is Probable Xaa-Pro aminopeptidase P (651 aa).

Residues Asp-448, Asp-459, Glu-557, and Glu-571 each contribute to the Mn(2+) site.

This sequence belongs to the peptidase M24B family. The cofactor is Mn(2+).

The catalysed reaction is Release of any N-terminal amino acid, including proline, that is linked to proline, even from a dipeptide or tripeptide.. Functionally, catalyzes the removal of a penultimate prolyl residue from the N-termini of peptides. The chain is Probable Xaa-Pro aminopeptidase P (AMPP) from Coccidioides posadasii (strain C735) (Valley fever fungus).